We begin with the raw amino-acid sequence, 473 residues long: UDP-N-acetylmuramate--L-alanine ligase (473 aa).

119 to 125 (GTHGKTT) provides a ligand contact to ATP.

Belongs to the MurCDEF family.

It localises to the cytoplasm. The enzyme catalyses UDP-N-acetyl-alpha-D-muramate + L-alanine + ATP = UDP-N-acetyl-alpha-D-muramoyl-L-alanine + ADP + phosphate + H(+). It participates in cell wall biogenesis; peptidoglycan biosynthesis. Functionally, cell wall formation. This Caulobacter vibrioides (strain NA1000 / CB15N) (Caulobacter crescentus) protein is UDP-N-acetylmuramate--L-alanine ligase.